We begin with the raw amino-acid sequence, 662 residues long: MTSKAVVFAYHDIGCTGIEALLNAGYEIAAVFTHADDPRENTFYASVARLCAERGIPLHAPEDVNHPLWLERIRQLRPDFLFSFYYRRLLGAELLACAARGAYNLHGSLLPRYRGRAPANWVLVNGETQTGVTLHRMIERADAGPILAQQAVAIDPEDTALSLHGKLRKAAGALLRDSLPLLALGVLPEVEQDESQASHFGRRTPADGLLDWHRPARQLYDLVRAVTQPYPGAFCQVGEQKLIVWSAEVVAGNHGREPGSVLSCDPLRIACGEDSLVLRFGQRGERGLYLAGTQLATELGLVEGARLRGAASGPQRRTRVLILGVNGFIGNHLSERLLRDGRYEVHGMDIGSDAIERLKADPHFHFVEGDIGIHSEWLEYHVKKCDVILPLVAIATPIEYTRNPLRVFELDFEENLRIVRYCVKYGKRVVFPSTSEVYGMCQDPDFDEDRSNLVVGPINKQRWIYSVSKQLLDRVIWAYGQQGLRFTLFRPFNWMGPRLDRLDSARIGSSRAITQLILHLVEGTPIRLVDGGAQKRCFTDVDDGIEALARIIDNRDGRCDGQIVNIGNPDNEASIRQLGEELLRQFEAHPLRAQFPPFAGFREVESRSFYGDGYQDVAHRKPSIDNARRLLDWQPTIELRETIGKTLDFFLHEALREREAQA.

A formyltransferase ArnAFT region spans residues M1–L307. Residue H106 is the Proton donor; for formyltransferase activity of the active site. (6R)-10-formyltetrahydrofolate-binding positions include R116 and I138–D142. A dehydrogenase ArnADH region spans residues R316–A662. NAD(+)-binding positions include D349 and D370–I371. Residues A395, Y400, and T434–S435 contribute to the UDP-alpha-D-glucuronate site. Catalysis depends on E436, which acts as the Proton acceptor; for decarboxylase activity. UDP-alpha-D-glucuronate is bound by residues R462, N493, R527–R536, and Y614. R620 (proton donor; for decarboxylase activity) is an active-site residue.

In the N-terminal section; belongs to the Fmt family. UDP-L-Ara4N formyltransferase subfamily. It in the C-terminal section; belongs to the NAD(P)-dependent epimerase/dehydratase family. UDP-glucuronic acid decarboxylase subfamily. Homohexamer, formed by a dimer of trimers.

The catalysed reaction is UDP-alpha-D-glucuronate + NAD(+) = UDP-beta-L-threo-pentopyranos-4-ulose + CO2 + NADH. It carries out the reaction UDP-4-amino-4-deoxy-beta-L-arabinose + (6R)-10-formyltetrahydrofolate = UDP-4-deoxy-4-formamido-beta-L-arabinose + (6S)-5,6,7,8-tetrahydrofolate + H(+). It functions in the pathway nucleotide-sugar biosynthesis; UDP-4-deoxy-4-formamido-beta-L-arabinose biosynthesis; UDP-4-deoxy-4-formamido-beta-L-arabinose from UDP-alpha-D-glucuronate: step 1/3. The protein operates within nucleotide-sugar biosynthesis; UDP-4-deoxy-4-formamido-beta-L-arabinose biosynthesis; UDP-4-deoxy-4-formamido-beta-L-arabinose from UDP-alpha-D-glucuronate: step 3/3. Its pathway is bacterial outer membrane biogenesis; lipopolysaccharide biosynthesis. In terms of biological role, bifunctional enzyme that catalyzes the oxidative decarboxylation of UDP-glucuronic acid (UDP-GlcUA) to UDP-4-keto-arabinose (UDP-Ara4O) and the addition of a formyl group to UDP-4-amino-4-deoxy-L-arabinose (UDP-L-Ara4N) to form UDP-L-4-formamido-arabinose (UDP-L-Ara4FN). The modified arabinose is attached to lipid A and is required for resistance to polymyxin and cationic antimicrobial peptides. The polypeptide is Bifunctional polymyxin resistance protein ArnA (Pseudomonas aeruginosa (strain LESB58)).